The sequence spans 1124 residues: uncharacterized protein (1124 aa).

An N-terminal signal peptide occupies residues 1–28 (MALFPRSILIALVLSFVLNLGLVTKIHA). The next 7 helical transmembrane spans lie at 332 to 352 (IVTA…LLAG), 359 to 379 (EYIN…GINI), 393 to 413 (MIQW…SWVM), 495 to 515 (MLVS…AFMV), 522 to 542 (MISI…FLFA), 555 to 575 (MISF…MFAV), and 700 to 720 (IKNI…MYNF).

Belongs to the TrbL/VirB6 family.

The protein localises to the cell membrane. This is an uncharacterized protein from Rickettsia prowazekii (strain Madrid E).